Reading from the N-terminus, the 332-residue chain is 4-hydroxy-3-methylbut-2-enyl diphosphate reductase (332 aa).

Position 34 (cysteine 34) interacts with [4Fe-4S] cluster. Positions 63 and 96 each coordinate (2E)-4-hydroxy-3-methylbut-2-enyl diphosphate. Histidine 63 and histidine 96 together coordinate dimethylallyl diphosphate. Histidine 63 and histidine 96 together coordinate isopentenyl diphosphate. Cysteine 118 is a binding site for [4Fe-4S] cluster. Histidine 146 contributes to the (2E)-4-hydroxy-3-methylbut-2-enyl diphosphate binding site. Position 146 (histidine 146) interacts with dimethylallyl diphosphate. Histidine 146 is a binding site for isopentenyl diphosphate. Glutamate 148 serves as the catalytic Proton donor. (2E)-4-hydroxy-3-methylbut-2-enyl diphosphate is bound at residue threonine 186. Cysteine 216 lines the [4Fe-4S] cluster pocket. Serine 244, serine 245, asparagine 246, and serine 289 together coordinate (2E)-4-hydroxy-3-methylbut-2-enyl diphosphate. Dimethylallyl diphosphate is bound by residues serine 244, serine 245, asparagine 246, and serine 289. The isopentenyl diphosphate site is built by serine 244, serine 245, asparagine 246, and serine 289.

The protein belongs to the IspH family. The cofactor is [4Fe-4S] cluster.

It catalyses the reaction isopentenyl diphosphate + 2 oxidized [2Fe-2S]-[ferredoxin] + H2O = (2E)-4-hydroxy-3-methylbut-2-enyl diphosphate + 2 reduced [2Fe-2S]-[ferredoxin] + 2 H(+). The catalysed reaction is dimethylallyl diphosphate + 2 oxidized [2Fe-2S]-[ferredoxin] + H2O = (2E)-4-hydroxy-3-methylbut-2-enyl diphosphate + 2 reduced [2Fe-2S]-[ferredoxin] + 2 H(+). It participates in isoprenoid biosynthesis; dimethylallyl diphosphate biosynthesis; dimethylallyl diphosphate from (2E)-4-hydroxy-3-methylbutenyl diphosphate: step 1/1. It functions in the pathway isoprenoid biosynthesis; isopentenyl diphosphate biosynthesis via DXP pathway; isopentenyl diphosphate from 1-deoxy-D-xylulose 5-phosphate: step 6/6. Its function is as follows. Catalyzes the conversion of 1-hydroxy-2-methyl-2-(E)-butenyl 4-diphosphate (HMBPP) into a mixture of isopentenyl diphosphate (IPP) and dimethylallyl diphosphate (DMAPP). Acts in the terminal step of the DOXP/MEP pathway for isoprenoid precursor biosynthesis. The chain is 4-hydroxy-3-methylbut-2-enyl diphosphate reductase from Mycobacterium ulcerans (strain Agy99).